An 87-amino-acid polypeptide reads, in one-letter code: Small ribosomal subunit protein bS16 (87 aa).

This sequence belongs to the bacterial ribosomal protein bS16 family.

This is Small ribosomal subunit protein bS16 from Psychrobacter sp. (strain PRwf-1).